We begin with the raw amino-acid sequence, 152 residues long: Putative RRN3-like protein RRN3P1 (152 aa).

This sequence belongs to the RRN3 family.

The protein is Putative RRN3-like protein RRN3P1 (RRN3P1) of Homo sapiens (Human).